A 468-amino-acid polypeptide reads, in one-letter code: 3-isopropylmalate dehydratase large subunit (468 aa).

The [4Fe-4S] cluster site is built by Cys-347, Cys-407, and Cys-410.

It belongs to the aconitase/IPM isomerase family. LeuC type 1 subfamily. Heterodimer of LeuC and LeuD. The cofactor is [4Fe-4S] cluster.

The catalysed reaction is (2R,3S)-3-isopropylmalate = (2S)-2-isopropylmalate. Its pathway is amino-acid biosynthesis; L-leucine biosynthesis; L-leucine from 3-methyl-2-oxobutanoate: step 2/4. Its function is as follows. Catalyzes the isomerization between 2-isopropylmalate and 3-isopropylmalate, via the formation of 2-isopropylmaleate. This is 3-isopropylmalate dehydratase large subunit from Synechococcus elongatus (strain ATCC 33912 / PCC 7942 / FACHB-805) (Anacystis nidulans R2).